Consider the following 394-residue polypeptide: Elongation factor Tu 1 (394 aa).

Positions 10–204 (KPHVNVGTIG…YLDSYIPEPE (195 aa)) constitute a tr-type G domain. The interval 19–26 (GHVDHGKT) is G1. 19–26 (GHVDHGKT) contributes to the GTP binding site. Thr-26 lines the Mg(2+) pocket. The tract at residues 60-64 (GITIN) is G2. The tract at residues 81–84 (DCPG) is G3. GTP is bound by residues 81–85 (DCPGH) and 136–139 (NKCD). The G4 stretch occupies residues 136-139 (NKCD). The G5 stretch occupies residues 174–176 (SAL).

It belongs to the TRAFAC class translation factor GTPase superfamily. Classic translation factor GTPase family. EF-Tu/EF-1A subfamily. In terms of assembly, monomer.

It is found in the cytoplasm. The catalysed reaction is GTP + H2O = GDP + phosphate + H(+). Its function is as follows. GTP hydrolase that promotes the GTP-dependent binding of aminoacyl-tRNA to the A-site of ribosomes during protein biosynthesis. This Yersinia enterocolitica serotype O:8 / biotype 1B (strain NCTC 13174 / 8081) protein is Elongation factor Tu 1.